The sequence spans 185 residues: Ribosome-recycling factor (185 aa).

This sequence belongs to the RRF family.

It localises to the cytoplasm. Its function is as follows. Responsible for the release of ribosomes from messenger RNA at the termination of protein biosynthesis. May increase the efficiency of translation by recycling ribosomes from one round of translation to another. The chain is Ribosome-recycling factor from Streptococcus sanguinis (strain SK36).